Here is a 489-residue protein sequence, read N- to C-terminus: CDK5RAP3 protein homolog (489 aa).

It belongs to the CDK5RAP3 family.

Functionally, substrate adapter of E3 ligase complexes mediating ufmylation, the covalent attachment of the ubiquitin-like modifier UFM1 to substrate proteins, and which is involved in various processes, such as ribosome recycling and reticulophagy (also called ER-phagy). This chain is CDK5RAP3 protein homolog, found in Caenorhabditis elegans.